The following is a 352-amino-acid chain: C-C chemokine receptor type 5 (352 aa).

At 1 to 30 the chain is on the extracellular side; sequence MDYQVSSPTYDIDYYTSEPCQKINVKQIAA. The residue at position 3 (Y3) is a Sulfotyrosine. O-linked (GalNAc...) serine glycosylation is found at S6 and S7. Y10, Y14, and Y15 each carry sulfotyrosine. Intrachain disulfides connect C20/C269 and C101/C178. A helical transmembrane segment spans residues 31 to 58; sequence RLLPPLYSLVFIFGFVGNILVVLILINC. The Cytoplasmic segment spans residues 59–68; that stretch reads KRLKSMTDIY. Residues 69–89 traverse the membrane as a helical segment; that stretch reads LLNLAISDLLFLLTVPFWAHY. Residues 90–102 are Extracellular-facing; sequence AAAQWNFGNTMCQ. The chain crosses the membrane as a helical span at residues 103–124; it reads LLTGLYFIGFFSGIFFIILLTI. Topologically, residues 125–141 are cytoplasmic; that stretch reads DRYLAIVHAVFALKART. The chain crosses the membrane as a helical span at residues 142 to 166; the sequence is VTFGVVTSVITWVVAVFASLPGIIF. At 167-198 the chain is on the extracellular side; that stretch reads TRYQREGLHYTCSSHFPYSQYQFWKNFQTLKI. Residues 199-218 form a helical membrane-spanning segment; that stretch reads VILGLVLPLLVMVICYSGIL. Topologically, residues 219–235 are cytoplasmic; it reads KTLLRCRNEKKRHRAVR. The chain crosses the membrane as a helical span at residues 236–260; that stretch reads LIFTIMIVYFLFWAPYNIVLLLNTF. The Extracellular segment spans residues 261–277; the sequence is QEFFGLNNCSSSNRLDQ. The helical transmembrane segment at 278–301 threads the bilayer; that stretch reads AMQVTETLGMTHCCINPIIYAFVG. Topologically, residues 302 to 352 are cytoplasmic; sequence EKFRNYLLVFFQKHIAKRFCKCCSIFQQEAPERASSVYTRSTGEQETSVGL. 3 S-palmitoyl cysteine lipidation sites follow: C321, C323, and C324. 4 positions are modified to phosphoserine; by BARK1: S336, S337, S342, and S349.

This sequence belongs to the G-protein coupled receptor 1 family. In terms of assembly, interacts with PRAF2. Efficient ligand binding to CCL3/MIP-1alpha and CCL4/MIP-1beta requires sulfation, O-glycosylation and sialic acid modifications. Glycosylation on Ser-6 is required for efficient binding of CCL4. Interacts with GRK2. Interacts with ARRB1 and ARRB2. Interacts with CNIH4. Interacts with S100A4; this interaction stimulates T-lymphocyte chemotaxis. Sulfated on at least 2 of the N-terminal tyrosines. Sulfation is required for efficient binding of the chemokines, CCL3 and CCL4. In terms of processing, palmitoylation in the C-terminal is important for cell surface expression. Post-translationally, phosphorylation on serine residues in the C-terminal is stimulated by binding CC chemokines especially by APO-RANTES. O-glycosylated, but not N-glycosylated. Ser-6 appears to be the major site even if Ser-7 may be also O-glycosylated. Also sialylated glycans present which contribute to chemokine binding. Thr-16 and Ser-17 may also be glycosylated and, if so, with small moieties such as a T-antigen.

Its subcellular location is the cell membrane. Receptor for a number of inflammatory CC-chemokines including CCL3/MIP-1-alpha, CCL4/MIP-1-beta and RANTES and subsequently transduces a signal by increasing the intracellular calcium ion level. May play a role in the control of granulocytic lineage proliferation or differentiation. Participates in T-lymphocyte migration to the infection site by acting as a chemotactic receptor. The sequence is that of C-C chemokine receptor type 5 (CCR5) from Erythrocebus patas (Red guenon).